The following is a 234-amino-acid chain: Cytochrome b (234 aa).

4 consecutive transmembrane segments (helical) span residues 33–53 (FGSLLGLCLMIQILTGLFLAM), 77–98 (WLIRYLHANGASMFFICLYMHV), 113–133 (WNIGIILLFAVMATAFMGYVL), and 178–198 (FFAFHFILPFIIAALVMIHLL). Heme b contacts are provided by H83 and H97. Heme b-binding residues include H182 and H196. Residue H201 coordinates a ubiquinone. Residues 226–234 (IKDVLGFLM) form a helical membrane-spanning segment.

The protein belongs to the cytochrome b family. The cytochrome bc1 complex contains 11 subunits: 3 respiratory subunits (MT-CYB, CYC1 and UQCRFS1), 2 core proteins (UQCRC1 and UQCRC2) and 6 low-molecular weight proteins (UQCRH/QCR6, UQCRB/QCR7, UQCRQ/QCR8, UQCR10/QCR9, UQCR11/QCR10 and a cleavage product of UQCRFS1). This cytochrome bc1 complex then forms a dimer. Heme b is required as a cofactor.

The protein localises to the mitochondrion inner membrane. Component of the ubiquinol-cytochrome c reductase complex (complex III or cytochrome b-c1 complex) that is part of the mitochondrial respiratory chain. The b-c1 complex mediates electron transfer from ubiquinol to cytochrome c. Contributes to the generation of a proton gradient across the mitochondrial membrane that is then used for ATP synthesis. This chain is Cytochrome b (MT-CYB), found in Lepus alleni (Antelope jackrabbit).